Consider the following 362-residue polypeptide: Chorismate synthase (362 aa).

NADP(+)-binding residues include R48 and R54. FMN contacts are provided by residues 125–127 (RSS), 238–239 (NA), G286, 301–305 (KPTSS), and R327.

This sequence belongs to the chorismate synthase family. Homotetramer. Requires FMNH2 as cofactor.

The enzyme catalyses 5-O-(1-carboxyvinyl)-3-phosphoshikimate = chorismate + phosphate. Its pathway is metabolic intermediate biosynthesis; chorismate biosynthesis; chorismate from D-erythrose 4-phosphate and phosphoenolpyruvate: step 7/7. Catalyzes the anti-1,4-elimination of the C-3 phosphate and the C-6 proR hydrogen from 5-enolpyruvylshikimate-3-phosphate (EPSP) to yield chorismate, which is the branch point compound that serves as the starting substrate for the three terminal pathways of aromatic amino acid biosynthesis. This reaction introduces a second double bond into the aromatic ring system. This Granulibacter bethesdensis (strain ATCC BAA-1260 / CGDNIH1) protein is Chorismate synthase.